The following is a 120-amino-acid chain: MGVLRSSFVAMMVMYMVLATTPNAEAVLTCGQVTGALAPCLGYLRSQVNVPVPLTCCNVVRGLNNAARTTLDKRTACGCLKQTANAVTGLNLNAAAGLPARCGVNIPYKISPTTDCNRVV.

The first 26 residues, 1–26 (MGVLRSSFVAMMVMYMVLATTPNAEA), serve as a signal peptide directing secretion. Intrachain disulfides connect cysteine 30-cysteine 79, cysteine 40-cysteine 56, cysteine 57-cysteine 102, and cysteine 77-cysteine 116.

The protein belongs to the plant LTP family. Expressed in protoderm cells of somatic and zygotic embryos, and transiently expressed in epidermal cell layers of leaves, flowers and seeds.

Its function is as follows. Plant non-specific lipid-transfer proteins transfer phospholipids as well as galactolipids across membranes. May play a role in wax or cutin deposition in the cell walls of expanding epidermal cells and certain secretory tissues. The chain is Non-specific lipid-transfer protein (EP2) from Daucus carota (Wild carrot).